We begin with the raw amino-acid sequence, 433 residues long: MTARSIKLFFARWKYLMFACCITYLLVIYAPISKSEQKDWKEGEIELSNDHELDVPILQKEELKPQQRPSFEENVPKKKTFNFNPVGKEPFDVEEVLTSSDIKLEERMTATVIPGQKRLILSWNAGHSQDNLQGCPDWNCEFTQVRARAPDADAVLIAHMDNDFVPKPNQYVVYFSQESPANSGIQIPRPDYINMTLGFRHDTPAGSPYGYTVKLGAKSRKTGQVVDANLVNGKAKGAAWFVSHCQTNSKREDFVKKLQKHLQIDIYGGCGPMKCARGDSKCDTMLDTDYHFYVTFENSICEDYVTEKLWKSGYQNTIIPLVLKRKLVEPFVPPNSFIAIDDFKSVKEMGDYLNYLMNNKTAYMEYFEWRHDYKVVFLDGSHHDVLERPWGFCQVCRMAWTEPRQKVLIPNWDAYWRQTCEKDGTLVDSIPLD.

At 1–12 (MTARSIKLFFAR) the chain is on the cytoplasmic side. Residues 13 to 32 (WKYLMFACCITYLLVIYAPI) form a helical; Signal-anchor for type II membrane protein membrane-spanning segment. Over 33 to 433 (SKSEQKDWKE…GTLVDSIPLD (401 aa)) the chain is Lumenal. Residues Asn-194 and Asn-359 are each glycosylated (N-linked (GlcNAc...) asparagine).

This sequence belongs to the glycosyltransferase 10 family. Requires Mg(2+) as cofactor. It depends on Mn(2+) as a cofactor. In terms of processing, N-glycosylated. Glycosylation is important for enzymatic activity. Expressed in the pharyngeal-intestinal (PI) and anal valves. Expressed in ASG neurons and in one or two neurons in the retrovesicular ganglion and two neurons posterior to the PI valve and PHA and PHB neurons in the tail.

The protein resides in the golgi apparatus. Its subcellular location is the golgi stack membrane. It carries out the reaction N(4)-{beta-D-GlcNAc-(1-&gt;2)-alpha-D-Man-(1-&gt;3)-[beta-D-GlcNAc-(1-&gt;2)-alpha-D-Man-(1-&gt;6)]-beta-D-Man-(1-&gt;4)-beta-D-GlcNAc-(1-&gt;4)-beta-D-GlcNAc}-L-asparaginyl-[protein] + GDP-beta-L-fucose = N(4)-{beta-D-GlcNAc-(1-&gt;2)-alpha-D-Man-(1-&gt;3)-[beta-D-GlcNAc-(1-&gt;2)-alpha-D-Man-(1-&gt;6)]-beta-D-Man-(1-&gt;4)-beta-D-GlcNAc-(1-&gt;4)-[alpha-L-Fuc(1-&gt;3)]-beta-D-GlcNAc}-L-asparaginyl-[protein] + GDP + H(+). Its pathway is protein modification; protein glycosylation. Inhibited by Cu(2+) or Zn(2+) and to a lesser extent Ni(2+) ions. In terms of biological role, preferentially catalyzes the addition of fucose in alpha 1-3 linkage to the first GlcNAc residue (with or without alpha 1,6-linked fucose), next to the peptide chains in N-glycans. Unlike in mammals, does not require the prior action of N-acetylglucosaminyltransferase I to generate complex N-glycans. The sequence is that of Alpha-(1,3)-fucosyltransferase fut-1 from Caenorhabditis elegans.